The primary structure comprises 278 residues: HTH-type transcriptional activator RhaS (278 aa).

The region spanning N174 to G272 is the HTH araC/xylS-type domain. 2 consecutive DNA-binding regions (H-T-H motif) follow at residues E191 to T212 and V239 to F262.

Binds DNA as a dimer.

The protein resides in the cytoplasm. Activates expression of the rhaBAD and rhaT operons. This Escherichia fergusonii (strain ATCC 35469 / DSM 13698 / CCUG 18766 / IAM 14443 / JCM 21226 / LMG 7866 / NBRC 102419 / NCTC 12128 / CDC 0568-73) protein is HTH-type transcriptional activator RhaS.